A 365-amino-acid chain; its full sequence is Class I histocompatibility antigen, Gogo-C*0101/C*0102 alpha chain (365 aa).

Positions methionine 1–alanine 24 are cleaved as a signal peptide. The interval glycine 25–aspartate 114 is alpha-1. Residues glycine 25–isoleucine 308 lie on the Extracellular side of the membrane. The N-linked (GlcNAc...) asparagine glycan is linked to asparagine 110. The segment at glycine 115–alanine 206 is alpha-2. 2 cysteine pairs are disulfide-bonded: cysteine 125-cysteine 188 and cysteine 227-cysteine 283. The interval aspartate 207–tryptophan 298 is alpha-3. The 89-residue stretch at proline 209–arginine 297 folds into the Ig-like C1-type domain. A connecting peptide region spans residues glutamate 299–isoleucine 308. The chain crosses the membrane as a helical span at residues valine 309–cysteine 332. At arginine 333–alanine 365 the chain is on the cytoplasmic side. Phosphoserine is present on residues serine 356 and serine 359.

This sequence belongs to the MHC class I family. As to quaternary structure, heterodimer of an alpha chain and a beta chain (beta-2-microglobulin).

It is found in the membrane. Its function is as follows. Involved in the presentation of foreign antigens to the immune system. The polypeptide is Class I histocompatibility antigen, Gogo-C*0101/C*0102 alpha chain (Gorilla gorilla gorilla (Western lowland gorilla)).